Reading from the N-terminus, the 78-residue chain is FXYD domain-containing ion transport regulator 7 (78 aa).

Topologically, residues 1-22 (MATQVPTKVPQDPDPFYYDYDT) are extracellular. O-linked (GlcNAc) threonine glycans are attached at residues Thr3 and Thr7. A helical transmembrane segment spans residues 23–43 (VQTVGMTLATILFLLGILIIL). Residues 44–78 (SKKVKCRKADSRSESPTCKSCKSELPSSAPGGGGV) are Cytoplasmic-facing. The segment at 52 to 78 (ADSRSESPTCKSCKSELPSSAPGGGGV) is disordered. The residue at position 71 (Ser71) is a Phosphoserine.

It belongs to the FXYD family. Regulatory subunit of the sodium/potassium-transporting ATPase which is composed of a catalytic alpha subunit, a non-catalytic beta subunit and an additional regulatory subunit. The regulatory subunit, a member of the FXYD protein family, modulates the enzymatic activity in a tissue- and isoform-specific way by changing affinities of the Na+/K+-ATPase toward Na(+), K(+) or ATP. O-glycosylated; required for stabilization and translocation to the plasma membrane.

Its subcellular location is the cell membrane. Its function is as follows. Associates with and regulates the activity of the sodium/potassium-transporting ATPase (NKA) which catalyzes the hydrolysis of ATP coupled with the exchange of Na(+) and K(+) ions across the plasma membrane. Reduces the apparent affinity for external K(+), an effect that depends on the presence of external Na(+) and voltage. Increases the apparent affinity for intracellular Na(+). The chain is FXYD domain-containing ion transport regulator 7 (FXYD7) from Bos taurus (Bovine).